Consider the following 582-residue polypeptide: PCNA-interacting partner (582 aa).

2 stretches are compositionally biased toward polar residues: residues 471-487 (GVNS…SSGN) and 501-510 (KSSSLTGNTS). The segment at 471–514 (GVNSSVGRPTIGTSSGNVHLGRSEKEKVARKSSSLTGNTSSKRK) is disordered.

This sequence belongs to the PARI family. As to quaternary structure, interacts with RAD51 and PCNA. Interacts with PARP1. Interacts with TASOR.

The protein localises to the cytoplasm. It localises to the nucleus. Its function is as follows. Required to suppress inappropriate homologous recombination, thereby playing a central role DNA repair and in the maintenance of genomic stability. Antagonizes homologous recombination by interfering with the formation of the RAD51-DNA homologous recombination structure. Binds single-strand DNA and poly(A) homopolymers. Positively regulate the poly(ADP-ribosyl)ation activity of PARP1; however such function may be indirect. In Bos taurus (Bovine), this protein is PCNA-interacting partner (PARPBP).